Reading from the N-terminus, the 164-residue chain is Lipoprotein signal peptidase (164 aa).

4 helical membrane-spanning segments follow: residues 8–28 (IVAAVAALIADQASKLWLLFV), 39–59 (VTPFFDLVLAWNTGISYGWFQ), 64–84 (VGATILLAIKAGAVVLLAIWM), and 91–111 (LATIGLGLIIGGAIGNAIDRF). Catalysis depends on residues aspartate 118 and aspartate 140. The helical transmembrane segment at 131–151 (YSWYVFNLADVAIVAGVIALL) threads the bilayer.

This sequence belongs to the peptidase A8 family.

It is found in the cell inner membrane. The enzyme catalyses Release of signal peptides from bacterial membrane prolipoproteins. Hydrolyzes -Xaa-Yaa-Zaa-|-(S,diacylglyceryl)Cys-, in which Xaa is hydrophobic (preferably Leu), and Yaa (Ala or Ser) and Zaa (Gly or Ala) have small, neutral side chains.. Its pathway is protein modification; lipoprotein biosynthesis (signal peptide cleavage). Its function is as follows. This protein specifically catalyzes the removal of signal peptides from prolipoproteins. The sequence is that of Lipoprotein signal peptidase from Nitrobacter hamburgensis (strain DSM 10229 / NCIMB 13809 / X14).